The sequence spans 286 residues: MQTIPDALFGIIGYPVSHSVSPAMQNAAFKHCKLNYLYLTIAAKPEDLQNVIASMRPLNIRGLNVTIPHKIEVIKYIDTLDPAAKKIGAVNTIVNENGQLKGYNTDFGGFVRLLEHNRIAPAKHRFALLGAGGSAHAISLAICTLGGHLTVLARQEEKAKDLAAKMCLRFKGKAQGLELNEANLEETLAESDIIVNCTPIGMGNLAGQSLIPPRLLRPDLTVIDAIYNPCKTRLLEDAEKKGAKIINGLEMLVWQGAMSFEIWTSQKAPFRVMMKEAEMALDENEK.

Shikimate is bound by residues 19–21 (SVS) and Thr66. Lys70 functions as the Proton acceptor in the catalytic mechanism. 2 residues coordinate shikimate: Asn91 and Asp106. Residues 130–134 (GAGGS) and Ala225 each bind NADP(+). Shikimate is bound at residue Tyr227. Gly248 provides a ligand contact to NADP(+).

This sequence belongs to the shikimate dehydrogenase family. Homodimer.

The catalysed reaction is shikimate + NADP(+) = 3-dehydroshikimate + NADPH + H(+). It functions in the pathway metabolic intermediate biosynthesis; chorismate biosynthesis; chorismate from D-erythrose 4-phosphate and phosphoenolpyruvate: step 4/7. In terms of biological role, involved in the biosynthesis of the chorismate, which leads to the biosynthesis of aromatic amino acids. Catalyzes the reversible NADPH linked reduction of 3-dehydroshikimate (DHSA) to yield shikimate (SA). This is Shikimate dehydrogenase (NADP(+)) from Dehalococcoides mccartyi (strain CBDB1).